The primary structure comprises 177 residues: Protein C2-DOMAIN ABA-RELATED 4 (177 aa).

The C2 domain occupies 4–118; sequence ACPARTSSLM…LRMQLDGLPS (115 aa). Ca(2+)-binding residues include R33, D34, D39, D85, H86, D87, and D93.

It belongs to the plant CAR protein family. Dimers and oligomers. Binds to PYR/PYL/RCAR abscisic acid intracellular receptors in an ABA-independent manner, both at the plasma membrane and in the nucleus. Interacts directly with PYR1, PYL1, PYL4, PYL6 and PYL8. Binds phospholipids in a Ca(2+)-dependent manner. Interacts with YchF1. Requires Ca(2+) as cofactor.

It is found in the cell membrane. It localises to the nucleus. Its subcellular location is the cytoplasm. The protein localises to the cytosol. In terms of biological role, mediates the transient calcium-dependent interaction of PYR/PYL/RCAR abscisic acid (ABA) receptors with the plasma membrane and thus regulates ABA sensitivity. Stimulates the GTPase/ATPase activities of YchF1, and regulates its subcellular localization. Promotes tolerance towards salinity stress by limiting the accumulation of reactive oxygen species (ROS). Promotes resistance to bacterial pathogens (e.g. Xanthomonas oryzae pv. oryzae and P.syringae pv. tomato DC3000). Binds liposomes in the absence of exogenous Ca(2+), but this activity is enhanced in the presence of Ca(2+) and generates membrane curvature. The sequence is that of Protein C2-DOMAIN ABA-RELATED 4 from Arabidopsis thaliana (Mouse-ear cress).